The chain runs to 120 residues: MKTSREKLQRRAQRVRTKLRRVAEGRPRLSVSRSHKNISVQIIDDEKGITLASASTLEKEVIASAKSSGNVEAAALVGKAIAERAKKAGVEDVVFDRGGYMFHGRVKALADAAREGGLKF.

Belongs to the universal ribosomal protein uL18 family. In terms of assembly, part of the 50S ribosomal subunit; part of the 5S rRNA/L5/L18/L25 subcomplex. Contacts the 5S and 23S rRNAs.

Functionally, this is one of the proteins that bind and probably mediate the attachment of the 5S RNA into the large ribosomal subunit, where it forms part of the central protuberance. The protein is Large ribosomal subunit protein uL18 of Hyphomonas neptunium (strain ATCC 15444).